A 109-amino-acid polypeptide reads, in one-letter code: Membrane-bound lysozyme inhibitor of C-type lysozyme (109 aa).

A signal peptide spans 1–17 (MTMKKLLIIILPVLLSG). Residue Cys18 is the site of N-palmitoyl cysteine attachment. Cys18 is lipidated: S-diacylglycerol cysteine. An intrachain disulfide couples Cys37 to Cys102.

The protein belongs to the MliC family. Type 1 subfamily. Monomer.

The protein resides in the cell outer membrane. In terms of biological role, specifically inhibits C-type lysozymes. This is Membrane-bound lysozyme inhibitor of C-type lysozyme from Escherichia coli (strain K12).